Reading from the N-terminus, the 470-residue chain is MDCVCDETMELILRFDDVIEPEKLRQSLGRLLEIGNWRKLGARVRPRENNAGVKFEYHIPEKYTETRPGFIYRESKYSDGISNHPTASRLPRQHSGLSILGATQDFASLGLQPGDPRHLADWAYTDLPQLFFHHTTFKDATVIAMTYPHSLMDGMGHGTFLRAWIAVLHGREDEVPELGGFEDARSHLTEGAPATKYLLHQYILGWYQTIVFGCWRFIETLWSSEEDRVVCIPRQFVQELRANVLDELDSGKGETFVSNNDVLLAWFARTILSIAGPLRNRSLVLMNSFNIRSVALSSQPAFINNAVIPACTILPIWKVLREPMSFLAMQVRRSLVQQRGLDQIHAWYKLMVSSLEQTGRPRVIGTSDGFTMIFSNWDKASLFRLDLSPAASEMGLPLGQRSTQLGYPSCVLCTTPFSMLGVRSGGCCLGKDAEGNWWTQWRLRRTEWDRLETILETINHQRQTHTGKGV.

Catalysis depends on proton acceptor residues H149 and D386.

This sequence belongs to the plant acyltransferase family. In terms of assembly, monomer.

Its pathway is secondary metabolite biosynthesis. O-acetyltransferase; part of the gene cluster that mediates the biosynthesis of protubonine B, a hydroxylated and diacetylated cyclo-L-Trp-L-Leu derivative. Within the pathway, pboC catalyzes the acetylation of protubonine D at the hydroxy group to produce protubonine C. The first step of the protubonine B synthesis is performed by the nonribosomal peptide synthetase pboA that catalyzes the formation of cyclo-L-Trp-L-Leu by condensing L-Leu with L-Trp. The flavin-dependent monooxygenase pboD is responsible for hydroxylation at C-3 of the indole ring and subsequent formation of the pyrrolidine ring, leadind to protubonine D. Protubonine D is further diacetylated by two acetyltransferases, pboB and pboC, to form the final product protubonine B via protubonine C. The polypeptide is O-acyltransferase pboC (Aspergillus ustus).